Reading from the N-terminus, the 457-residue chain is Transcription factor E2F3 (457 aa).

The tract at residues 80–171 (LLPSVPGTEP…PKSPSEKTRY (92 aa)) is disordered. Polar residues predominate over residues 93–102 (SLYTTPQGPS). The interval 96–145 (TTPQGPSSRVGLLQQPPAPGRGGGGGPPAKRRLELGESGHQYLSDGLKTP) is cyclin A/CDK2 binding. The DNA-binding element occupies 147-237 (GKGRAALRSP…KNNVQWMGCS (91 aa)). Low complexity predominate over residues 155–164 (SPDSPKTPKS). The interval 196-217 (LNKAAEVLKVQKRRIYDITNVL) is leucine-zipper. Residues 201–237 (EVLKVQKRRIYDITNVLEGIHLIKKKSKNNVQWMGCS) carry the DEF box motif. The dimerization stretch occupies residues 238–329 (LSEDGGMLAQ…VPDSIESLQI (92 aa)). Residues 350–387 (HRPMKTNNQDHNGNIPKPTSKDLASNNSGHSDCSVSTA) are disordered. Residues 371–387 (DLASNNSGHSDCSVSTA) show a composition bias toward polar residues. Positions 383-457 (SVSTANLSPL…LPLVEDFMCS (75 aa)) are transactivation. Positions 424-441 (EDYLLSLGEEEGISDLFD) are retinoblastoma protein binding.

This sequence belongs to the E2F/DP family. In terms of assembly, component of the DRTF1/E2F transcription factor complex. Binds cooperatively with TFDP1/Dp-1 to E2F sites. Interacts with retinoblastoma protein RB1 and related proteins (such as RBL1) that inhibit the E2F transactivation domain. Binds EAPP.

The protein resides in the nucleus. In terms of biological role, transcription activator that binds DNA cooperatively with DP proteins through the E2 recognition site, 5'-TTTC[CG]CGC-3' found in the promoter region of a number of genes whose products are involved in cell cycle regulation or in DNA replication. The DRTF1/E2F complex functions in the control of cell-cycle progression from G1 to S phase. E2F3 binds specifically to RB1 in a cell-cycle dependent manner. Inhibits adipogenesis, probably through the repression of CEBPA binding to its target gene promoters. The polypeptide is Transcription factor E2F3 (E2f3) (Mus musculus (Mouse)).